The sequence spans 761 residues: MELLHLLLFSWALSAHLFLALAQRSTYIVHLDKSLMPNVFTDHHHWHSSTIDSIKASVPSSVDRFHSAPKLVYSYDNVLHGFSAVLSKDELAALKKLPGFISAYKDRTVEPHTTHTSDFLKLNPSSGLWPASGLGQDVIVAVLDSGIWPESASFQDDGMPEIPKRWKGICKPGTQFNASMCNRKLIGANYFNKGILANDPTVNITMNSARDTDGHGTHCASITAGNFAKGVSHFGYAPGTARGVAPRARLAVYKFSFNEGTFTSDLIAAMDQAVADGVDMISISYGYRFIPLYEDAISIASFGAMMKGVLVSASAGNRGPGIGSLNNGSPWILCVASGHTDRTFAGTLTLGNGLKIRGWSLFPARAFVRDSPVIYNKTLSDCSSEELLSQVENPENTIVICDDNGDFSDQMRIITRARLKAAIFISEDPGVFRSATFPNPGVVVNKKEGKQVINYVKNSVTPTATITFQETYLDTKPAPVVAASSARGPSRSYLGISKPDILAPGVLILAAYPPNVFATSIGTNILLSTDYILESGTSMAAPHAAGIAAMLKAAHPEWSPSAIRSAMMTTADPLDNTRKPIKDSDNNKAATPLDMGAGHVDPNRALDPGLVYDATPQDYVNLLCSLNFTEEQFKTIARSSASHNCSNPSADLNYPSFIALYSIEGNFTLLEQKFKRTVTNVGKGAATYKAKLKAPKNSTISVSPQILVFKNKNEKQSYTLTIRYIGDEGQSRNVGSITWVEQNGNHSVRSPIVTSPIIEVW.

The N-terminal stretch at M1–A22 is a signal peptide. The propeptide occupies Q23–H112. Residues T26–E110 form the Inhibitor I9 domain. The 491-residue stretch at T116 to L606 folds into the Peptidase S8 domain. D144 serves as the catalytic Charge relay system. C170 and C181 form a disulfide bridge. 2 N-linked (GlcNAc...) (complex) asparagine; alternate glycosylation sites follow: N177 and N203. Residues N177 and N203 are each glycosylated (N-linked (GlcNAc...) (paucimannose) asparagine; alternate). Residue H215 is the Charge relay system of the active site. N-linked (GlcNAc...) (paucimannose) asparagine; partial glycosylation occurs at N376. Residues C382 and C401 are joined by a disulfide bond. The active-site Charge relay system is S538. Residues L574–G598 form a disordered region. Residues D575 to N586 are compositionally biased toward basic and acidic residues. An intrachain disulfide couples C624 to C645. 2 N-linked (GlcNAc...) (complex) asparagine; alternate glycosylation sites follow: N697 and N745. N-linked (GlcNAc...) (paucimannose) asparagine; alternate glycosylation is found at N697 and N745. The necessary for prodomain cleavage and secretion stretch occupies residues P756–W761.

It belongs to the peptidase S8 family. As to quaternary structure, homodimer. Propeptide is internally cleaved at Asn-38 and Asp-52 in a pH-dependent manner leading to the dissociation of the propeptide from the catalytic domain and resulting in the release of the active subtilase. Cleavage occurs at pH 5.7 and to a stronger extent at pH 5.2. Expressed in flowers, cotyledons and leaves with the highest expression in roots.

It localises to the secreted. Inhibited by 1 mM 4-(2-aminoethyl)-benzenesulfonyl fluoride (AEBSF), a general inhibitor of serine proteinases, but not by the more selective serine protease inhibitors N-alpha-tosyl-L-lysinyl-chloromethylketone (TLCK), N-tosyl-L-phenylalaninyl-chloromethylketone (TPCK), leupeptin, aprotinin or benzamidine. Its proteolytic activity is autoinhibited by the non-covalent binding of the propeptide to the catalytic domain. No effect on activity by the addition of CaCl(2) or calcium chelators. Serine protease. Has preference for Gln in the P1 position and Lys in the P2 position of oligopeptide substrates. Active also with His in the P1 position. Involved in resistance against insects partly by regulating expression of systemic wound response genes and possibly by its post-ingestive activity in the insect gut. Apart from the role in defense, may be involved in regulation of pectin methylesterases (PMEs) activity and pectin methylesterification of the cell wall. The polypeptide is Subtilisin-like protease SBT3 (Solanum lycopersicum (Tomato)).